The following is a 1173-amino-acid chain: Alpha-mannosidase 2 (1173 aa).

A disordered region spans residues 1 to 21 (MPFSSYIGNSRRSSTGGGTGG). Topologically, residues 1–50 (MPFSSYIGNSRRSSTGGGTGGWGQSLLPTALSKSKLAINRKPRKRTLVVN) are cytoplasmic. Residues 51-71 (FIFANFFVIALTVSLLFFLLT) traverse the membrane as a helical; Signal-anchor segment. Over 72-1173 (LFHFGVPGPI…AYKLELRPHK (1102 aa)) the chain is Lumenal. Asparagine 106 carries N-linked (GlcNAc...) asparagine glycosylation. The Zn(2+) site is built by histidine 162 and aspartate 164. Asparagine 262 carries an N-linked (GlcNAc...) asparagine glycan. Aspartate 276 is a binding site for Zn(2+). Aspartate 276 acts as the Nucleophile in catalysis. Asparagine 467 is a glycosylation site (N-linked (GlcNAc...) asparagine). Residue histidine 564 participates in Zn(2+) binding. Residues asparagine 675, asparagine 772, asparagine 782, asparagine 991, asparagine 1098, and asparagine 1108 are each glycosylated (N-linked (GlcNAc...) asparagine).

It belongs to the glycosyl hydrolase 38 family. As to quaternary structure, homodimer; disulfide-linked. Interacts with GALT1. It depends on Zn(2+) as a cofactor. In terms of processing, glycosylated.

Its subcellular location is the golgi apparatus membrane. The catalysed reaction is N(4)-{beta-D-GlcNAc-(1-&gt;2)-alpha-D-Man-(1-&gt;3)-[alpha-D-Man-(1-&gt;3)-[alpha-D-Man-(1-&gt;6)]-alpha-D-Man-(1-&gt;6)]-beta-D-Man-(1-&gt;4)-beta-D-GlcNAc-(1-&gt;4)-beta-D-GlcNAc}-L-asparaginyl-[protein] + 2 H2O = 2 alpha-D-mannopyranose + an N(4)-{beta-D-GlcNAc-(1-&gt;2)-alpha-D-Man-(1-&gt;3)-[alpha-D-Man-(1-&gt;6)]-beta-D-Man-(1-&gt;4)-beta-D-GlcNAc-(1-&gt;4)-beta-D-GlcNAc}-L-asparaginyl-[protein]. It participates in protein modification; protein glycosylation. Its activity is regulated as follows. Inhibited by 1 mM Cu(2+) and by the class II alpha-mannosidase inhibitor swainsonine. In terms of biological role, catalyzes the first committed step in the biosynthesis of complex N-glycans. It controls conversion of high mannose to complex N-glycans; the final hydrolytic step in the N-glycan maturation pathway. Converts GlcNAcMan(5)GlcNAc(2) (Man5Gn) into GlcNAcMan(3)GlcNAc(2) (MGn) by sequential removal of two alpha1,6- and alpha1,3-linked mannose residues from the alpha1,6-mannose branch of the substrate. To a lesser extent, also able to cleave beta1,2-xylosylated Man5Gn-glycopeptide (Man5GnX-GP) and pyridylaminated substrates Man5Gn-PA and Man5GnX-PA, but not active toward Man5-glycopeptide. Required for resistance to salt stress. The polypeptide is Alpha-mannosidase 2 (Arabidopsis thaliana (Mouse-ear cress)).